The following is a 65-amino-acid chain: Toxin Cbi1 (65 aa).

One can recognise an LCN-type CS-alpha/beta domain in the interval 1–64 (KDGYPMDNKG…VWDRATNKCR (64 aa)). Intrachain disulfides connect cysteine 11–cysteine 63, cysteine 15–cysteine 37, cysteine 22–cysteine 44, and cysteine 26–cysteine 46.

It belongs to the long (4 C-C) scorpion toxin superfamily. Sodium channel inhibitor family. Beta subfamily. As to expression, expressed by the venom gland.

The protein localises to the secreted. Beta toxins bind voltage-independently at site-4 of sodium channels (Nav) and shift the voltage of activation toward more negative potentials thereby affecting sodium channel activation and promoting spontaneous and repetitive firing. The sequence is that of Toxin Cbi1 from Centruroides bicolor (Scorpion).